The chain runs to 428 residues: Histidine--tRNA ligase (428 aa).

It belongs to the class-II aminoacyl-tRNA synthetase family. Homodimer.

Its subcellular location is the cytoplasm. It catalyses the reaction tRNA(His) + L-histidine + ATP = L-histidyl-tRNA(His) + AMP + diphosphate + H(+). In Lactobacillus delbrueckii subsp. bulgaricus (strain ATCC BAA-365 / Lb-18), this protein is Histidine--tRNA ligase.